A 257-amino-acid chain; its full sequence is DNA-binding and peroxide stress resistance protein YaaA (257 aa).

The Helix-hairpin-helix signature appears at 35-66; the sequence is IGIARKLSAPQIGKLMSISDKLADLNATRFHD.

The protein belongs to the UPF0246 family.

The protein localises to the cytoplasm. Functionally, protects bacteria from neutrophil-related defense upon infection of mammals. Binds DNA. This is DNA-binding and peroxide stress resistance protein YaaA from Klebsiella pneumoniae subsp. pneumoniae (strain HS11286).